Consider the following 691-residue polypeptide: Pentatricopeptide repeat-containing protein At4g37170 (691 aa).

PPR repeat units lie at residues 84–118 (PASTYCNLIQVCSQTRALEEGKKVHEHIRTSGFVP), 119–149 (GIVIWNRLLRMYAKCGSLVDARKVFDEMPNR), 150–184 (DLCSWNVMVNGYAEVGLLEEARKLFDEMTEKDSYS), 185–211 (WTAMVTGYVKKDQPEEALVLYSLMQRV), 217–251 (NIFTVSIAVAAAAAVKCIRRGKEIHGHIVRAGLDS), 252–286 (DEVLWSSLMDMYGKCGCIDEARNIFDKIVEKDVVS), 287–317 (WTSMIDRYFKSSRWREGFSLFSELVGSCERP), 318–352 (NEYTFAGVLNACADLTTEELGKQVHGYMTRVGFDP), 353–383 (YSFASSSLVDMYTKCGNIESAKHVVDGCPKP), 384–418 (DLVSWTSLIGGCAQNGQPDEALKYFDLLLKSGTKP), 419–449 (DHVTFVNVLSACTHAGLVEKGLEFFYSITEK), and 455–485 (TSDHYTCLVDLLARSGRFEQLKSVISEMPMK). The interval 490–565 (LWASVLGGCS…RPGSSWTEIK (76 aa)) is type E motif. Positions 566–596 (RKRHVFIAADTSHPMYNQIVEFLRELRKKMK) are type E(+) motif. The type DYW motif stretch occupies residues 597 to 691 (EEGYVPATSL…NGQCSCGDYW (95 aa)).

Belongs to the PPR family. PCMP-H subfamily.

In Arabidopsis thaliana (Mouse-ear cress), this protein is Pentatricopeptide repeat-containing protein At4g37170 (PCMP-H5).